Consider the following 883-residue polypeptide: Phosphoenolpyruvate carboxylase (883 aa).

Residues His138 and Lys546 contribute to the active site.

It belongs to the PEPCase type 1 family. Requires Mg(2+) as cofactor.

It catalyses the reaction oxaloacetate + phosphate = phosphoenolpyruvate + hydrogencarbonate. Its function is as follows. Forms oxaloacetate, a four-carbon dicarboxylic acid source for the tricarboxylic acid cycle. This Salmonella gallinarum (strain 287/91 / NCTC 13346) protein is Phosphoenolpyruvate carboxylase.